The chain runs to 554 residues: Glucose-6-phosphate isomerase 1 (554 aa).

Glutamate 359 serves as the catalytic Proton donor. Catalysis depends on residues histidine 390 and lysine 518.

The protein belongs to the GPI family.

The protein localises to the cytoplasm. It catalyses the reaction alpha-D-glucose 6-phosphate = beta-D-fructose 6-phosphate. Its pathway is carbohydrate biosynthesis; gluconeogenesis. It functions in the pathway carbohydrate degradation; glycolysis; D-glyceraldehyde 3-phosphate and glycerone phosphate from D-glucose: step 2/4. Catalyzes the reversible isomerization of glucose-6-phosphate to fructose-6-phosphate. The protein is Glucose-6-phosphate isomerase 1 of Pseudomonas putida (strain ATCC 47054 / DSM 6125 / CFBP 8728 / NCIMB 11950 / KT2440).